Reading from the N-terminus, the 111-residue chain is Cell division protein FtsB (111 aa).

Over 1–3 the chain is Cytoplasmic; that stretch reads MRL. A helical transmembrane segment spans residues 4 to 21; the sequence is ITLFLLLLLLAIQYPLWL. The Periplasmic portion of the chain corresponds to 22 to 111; it reads GKGGWLRVWD…PPPAGQQAHH (90 aa). The stretch at 31 to 64 forms a coiled coil; that stretch reads DMQKQVTAQNQRNAELKQRNTKLEGEVKDLKEGT. The tract at residues 89–111 is disordered; it reads APAPKTSETPLPPPPPAGQQAHH.

Belongs to the FtsB family. As to quaternary structure, part of a complex composed of FtsB, FtsL and FtsQ.

Its subcellular location is the cell inner membrane. Its function is as follows. Essential cell division protein. May link together the upstream cell division proteins, which are predominantly cytoplasmic, with the downstream cell division proteins, which are predominantly periplasmic. This chain is Cell division protein FtsB, found in Ralstonia pickettii (strain 12J).